The chain runs to 263 residues: TLC domain-containing protein 4 (263 aa).

The next 4 helical transmembrane spans lie at 7–27 (LLISVTCISFFTFQLLFYFVS), 53–73 (VVSTCHSLVVGIFGLYIFLFD), 90–110 (VNIAIASGYLISDLSIIILYW), and 124–144 (ASLYAYYLVLKNGVLAYIGNF). One can recognise a TLC domain in the interval 44–246 (KKKIEWNSRV…ISKGCIKVIS (203 aa)). The residue at position 165 (Lys-165) is an N6-acetyllysine. Transmembrane regions (helical) follow at residues 173–193 (IVINGILMTVVFFIVRIASML) and 211–231 (LGVLIQLSWVISCVVLDVMNV).

The protein belongs to the TLCD4 family.

The protein resides in the membrane. The polypeptide is TLC domain-containing protein 4 (Homo sapiens (Human)).